We begin with the raw amino-acid sequence, 225 residues long: 3-dehydroquinate dehydratase (225 aa).

3-dehydroquinate is bound by residues 30–32 and Arg-62; that span reads EWR. His-118 functions as the Proton donor/acceptor in the catalytic mechanism. Lys-143 (schiff-base intermediate with substrate) is an active-site residue. The 3-dehydroquinate site is built by Arg-186, Ser-205, and Gln-209.

The protein belongs to the type-I 3-dehydroquinase family. In terms of assembly, homodimer.

The catalysed reaction is 3-dehydroquinate = 3-dehydroshikimate + H2O. It participates in metabolic intermediate biosynthesis; chorismate biosynthesis; chorismate from D-erythrose 4-phosphate and phosphoenolpyruvate: step 3/7. Involved in the third step of the chorismate pathway, which leads to the biosynthesis of aromatic amino acids. Catalyzes the cis-dehydration of 3-dehydroquinate (DHQ) and introduces the first double bond of the aromatic ring to yield 3-dehydroshikimate. This Streptococcus thermophilus (strain ATCC BAA-491 / LMD-9) protein is 3-dehydroquinate dehydratase.